Consider the following 386-residue polypeptide: Mannitol-1-phosphate 5-dehydrogenase (386 aa).

4–15 (ALHFGAGNIGRG) is an NAD(+) binding site.

Belongs to the mannitol dehydrogenase family.

It carries out the reaction D-mannitol 1-phosphate + NAD(+) = beta-D-fructose 6-phosphate + NADH + H(+). This Caldanaerobacter subterraneus subsp. tengcongensis (strain DSM 15242 / JCM 11007 / NBRC 100824 / MB4) (Thermoanaerobacter tengcongensis) protein is Mannitol-1-phosphate 5-dehydrogenase.